The primary structure comprises 132 residues: ATP synthase epsilon chain (132 aa).

It belongs to the ATPase epsilon chain family. F-type ATPases have 2 components, CF(1) - the catalytic core - and CF(0) - the membrane proton channel. CF(1) has five subunits: alpha(3), beta(3), gamma(1), delta(1), epsilon(1). CF(0) has three main subunits: a, b and c.

It localises to the cell inner membrane. Its function is as follows. Produces ATP from ADP in the presence of a proton gradient across the membrane. The protein is ATP synthase epsilon chain of Anaeromyxobacter dehalogenans (strain 2CP-1 / ATCC BAA-258).